The primary structure comprises 60 residues: EKVCADLVKGAKDKHLRVKGPVRIPTKVLHITTRKSPCGEGTNTWDRFEFRIHKRVIDLI.

The protein belongs to the universal ribosomal protein uS10 family.

In Zea mays (Maize), this protein is Small ribosomal subunit protein uS10 (RPS20).